The chain runs to 418 residues: Ig-like V-type domain-containing protein FAM187A (418 aa).

Residues methionine 1–alanine 18 form the signal peptide. The Extracellular segment spans residues phenylalanine 19 to threonine 376. Positions proline 267–serine 361 constitute an Ig-like V-type domain. Cysteine 289 and cysteine 345 are oxidised to a cystine. N-linked (GlcNAc...) asparagine glycosylation is present at asparagine 317. A helical transmembrane segment spans residues alanine 377 to leucine 397. The Cytoplasmic segment spans residues cysteine 398–leucine 418.

It belongs to the FAM187 family.

It is found in the membrane. The protein is Ig-like V-type domain-containing protein FAM187A (Fam187a) of Rattus norvegicus (Rat).